The sequence spans 1028 residues: Pro-apoptotic serine protease nma111 (1028 aa).

The interval 1–45 is disordered; sequence MDMSGESSIKRRRSSIAASAERPAKHLRPENSTLTPGDATPANGT. The interval 82–266 is serine protease; it reads VVSIHFCQTC…AATDYFLPLD (185 aa). Catalysis depends on charge relay system residues His120, Asp151, and Ser233. PDZ domains follow at residues 289-374 and 876-957; these read QWIL…LLVQ and VFCG…VTFD.

Belongs to the peptidase S1C family.

Its subcellular location is the nucleus. Nuclear serine protease which mediates apoptosis. In Aspergillus clavatus (strain ATCC 1007 / CBS 513.65 / DSM 816 / NCTC 3887 / NRRL 1 / QM 1276 / 107), this protein is Pro-apoptotic serine protease nma111 (nma111).